Consider the following 322-residue polypeptide: HPr kinase/phosphorylase (322 aa).

Catalysis depends on residues H146 and K167. 161–168 is a binding site for ATP; that stretch reads GDSGLGKS. S168 contacts Mg(2+). D185 functions as the Proton acceptor; for phosphorylation activity. Proton donor; for dephosphorylation activity in the catalytic mechanism. The interval 209 to 218 is important for the catalytic mechanism of both phosphorylation and dephosphorylation; the sequence is LEVRGLGLLD. Residue E210 participates in Mg(2+) binding. Residue R250 is part of the active site. The important for the catalytic mechanism of dephosphorylation stretch occupies residues 271-276; it reads QVAAGR.

It belongs to the HPrK/P family. In terms of assembly, homohexamer. It depends on Mg(2+) as a cofactor.

It catalyses the reaction [HPr protein]-L-serine + ATP = [HPr protein]-O-phospho-L-serine + ADP + H(+). It carries out the reaction [HPr protein]-O-phospho-L-serine + phosphate + H(+) = [HPr protein]-L-serine + diphosphate. Functionally, catalyzes the ATP- as well as the pyrophosphate-dependent phosphorylation of a specific serine residue in HPr, a phosphocarrier protein of the phosphoenolpyruvate-dependent sugar phosphotransferase system (PTS). HprK/P also catalyzes the pyrophosphate-producing, inorganic phosphate-dependent dephosphorylation (phosphorolysis) of seryl-phosphorylated HPr (P-Ser-HPr). The protein is HPr kinase/phosphorylase of Burkholderia multivorans (strain ATCC 17616 / 249).